We begin with the raw amino-acid sequence, 635 residues long: Leucine aminopeptidase 2-2 (635 aa).

Substrate is bound by residues 141-143 and 265-270; these read QCQ and PYGGME. A Zn(2+)-binding site is contributed by histidine 294. Glutamate 295 acts as the Proton acceptor in catalysis. Residues histidine 298 and glutamate 317 each coordinate Zn(2+). Tyrosine 399 acts as the Proton donor in catalysis.

This sequence belongs to the peptidase M1 family. The cofactor is Zn(2+).

The protein localises to the cytoplasm. It is found in the nucleus. The enzyme catalyses an epoxide + H2O = an ethanediol. Aminopeptidase that preferentially cleaves di- and tripeptides. Also has low epoxide hydrolase activity (in vitro). Can hydrolyze the epoxide leukotriene LTA(4) but it forms preferentially 5,6-dihydroxy-7,9,11,14-eicosatetraenoic acid rather than the cytokine leukotriene B(4) as the product compared to the homologous mammalian enzyme (in vitro). The sequence is that of Leucine aminopeptidase 2-2 (LTA4) from Scheffersomyces stipitis (strain ATCC 58785 / CBS 6054 / NBRC 10063 / NRRL Y-11545) (Yeast).